The following is a 584-amino-acid chain: Chondroitin proteoglycan 1 (584 aa).

The signal sequence occupies residues 1–17; that stretch reads MTLKPVLLAFLVASAYA. Residue serine 50 is glycosylated (O-linked (Xyl...) (chondroitin sulfate) serine). 3 consecutive Chitin-binding type-2 domains span residues 58–115, 211–268, and 524–578; these read DTDC…QCGG, TKSC…ECTN, and VPAC…ECHQ. Cystine bridges form between cysteine 91–cysteine 104 and cysteine 244–cysteine 257. A disordered region spans residues 267 to 295; the sequence is TNGSGNDEGSADETTPESSGEMPYSNGYG. Residue asparagine 268 is glycosylated (N-linked (GlcNAc...) asparagine). The cysteines at positions 554 and 567 are disulfide-linked.

In terms of tissue distribution, expressed in the germline.

In terms of biological role, required for polar body extrusion during cytokinesis in embryo development. Affects cortical granule size. Has roles in meiotic chromosome segregation, osmotic barrier function and polarization in conjunction with cpg-2. Binds chitin. This is Chondroitin proteoglycan 1 (cpg-1) from Caenorhabditis elegans.